The sequence spans 901 residues: HTH-type transcriptional regulator MalT (901 aa).

39 to 46 (SPAGYGKT) contributes to the ATP binding site. The region spanning 829–894 (ELIRTSPLTQ…DAVQHAQQLL (66 aa)) is the HTH luxR-type domain. Positions 853–872 (NEQIAGELDVAATTIKTHIR) form a DNA-binding region, H-T-H motif.

The protein belongs to the MalT family. Monomer in solution. Oligomerizes to an active state in the presence of the positive effectors ATP and maltotriose.

Its activity is regulated as follows. Activated by ATP and maltotriose, which are both required for DNA binding. In terms of biological role, positively regulates the transcription of the maltose regulon whose gene products are responsible for uptake and catabolism of malto-oligosaccharides. Specifically binds to the promoter region of its target genes, recognizing a short DNA motif called the MalT box. The protein is HTH-type transcriptional regulator MalT of Klebsiella pneumoniae subsp. pneumoniae (strain ATCC 700721 / MGH 78578).